A 501-amino-acid chain; its full sequence is ATP synthase subunit alpha (501 aa).

ATP is bound at residue 169 to 176; sequence GDRQTGKT.

This sequence belongs to the ATPase alpha/beta chains family. As to quaternary structure, F-type ATPases have 2 components, CF(1) - the catalytic core - and CF(0) - the membrane proton channel. CF(1) has five subunits: alpha(3), beta(3), gamma(1), delta(1), epsilon(1). CF(0) has three main subunits: a(1), b(2) and c(9-12). The alpha and beta chains form an alternating ring which encloses part of the gamma chain. CF(1) is attached to CF(0) by a central stalk formed by the gamma and epsilon chains, while a peripheral stalk is formed by the delta and b chains.

The protein resides in the cell membrane. The catalysed reaction is ATP + H2O + 4 H(+)(in) = ADP + phosphate + 5 H(+)(out). Produces ATP from ADP in the presence of a proton gradient across the membrane. The alpha chain is a regulatory subunit. The sequence is that of ATP synthase subunit alpha from Streptococcus gordonii (strain Challis / ATCC 35105 / BCRC 15272 / CH1 / DL1 / V288).